The primary structure comprises 1463 residues: MPLLSLSLLLLLLQVPAGSAETAAWAVTPERLREWQDKGIFIIQSENLEKCIQASKSTLTLENCKPPNKYMLWKWVSNHRLFNIGGSGCLGLNVSSPEQPLSIYECDSTHVSLKWHCNKKTITGPLQYLVQVKQDNTLVASRKYLHKWVSYMSGGGGICDYLHKDLYTIKGNAHGTPCMFPFQYNQQWHHECTREGREDNLLWCATTSRYERDEKWGFCPDPTSTEVGCDAVWEKDLHSRICYQFNLLSSLSWSEAHSSCQMQGAALLSIADETEENFVRKHLGSEAVEVWMGLNQLDEDAGWQWSDRTPLNYLNWKPEINFEPFVEYHCGTFNAFMPKAWKSRDCESTLPYVCKKYLNPTDHGVVEKDAWKYYATHCEPGWNPHNRNCYKLQKEKKTWNEALQSCQSNNSVLTDITSLAEVEFLVTLLGDENASETWIGLSSHKIPVSFEWSNGSSVTFTNWHTLEPHIFPNRSQLCVSAEQSEGHWKVKNCEETLFYLCKKTGLVLSDTESGCQKGWERHGKFCYKIDTVLRSFDHASSGYYCPPALITITSRFEQAFITSLISSVVKTKDTYFWIALQDQNNTGEYTWKTAGQQLEPVKYTHWNTRQPRYSGGCVVMRGRSHPGRWEVRDCRHFKAMSLCKQPVENREKTKQEEGWPFHPCYLDWESEPGLASCFKVFHSEKVLMKRTWRQAEEFCEEFGAHLASFAHIEEENFVNELLHSKFNRTEERQFWIGFNKRNPLNAGSWEWSDGTPVVSSFLDNSYFGEDARNCAVYKANKTLLPSYCGSKREWICKIPRDVRPKVPPWYQYDAPWLFYQDAEYLFHISASEWSSFEFVCGWLRSDILTIHSAHEQEFIHSKIRALSKYGVNWWIGLREERASDEFRWRDGSPVIYQNWDKGKERSMGLNESQRCGFISSITGLWASEECSISMPSICKRKKVWVIEKKKDIPKQHGTCPKGWLYFDYKCLLLKIPEGPSDWKNWTSAQDFCVEEGGTLVAIENEVEQAFITMNLFGHTTNVWIGLQDDDYEKWLNGRPVSYSNWSPFDTKNIPNHNTTEVQKRIPLCGLLSNNPNFHFTGKWYFEDCREGYGFVCEKMQDASGHSINTSDMYPIPNTLEYGNRTYKIINANMTWYTALKTCLMHGAELASITDQYHQSFLTVILNRVGYAHWIGLFTEDNGLSFDWSDGTKSSFTFWKDDESSFLGDCVFADTSGRWSSTACESYLQGAICQVPTETRLSGRLELCSETSIPWIKFKSNCYSFSTVLESTSFEAAHEFCKKKGSNLLTIKDEAENSFLLEELLAFRSSVQMIWLNAQFDGDNETIKWFDGTPTDQSNWGIRKPEVYHFKPHLCVALRIPEGVWQLSSCQDKKGFICKMEADIHTVKKHPGKGPSHSVIPLTVALTLLVILAISTLSFCMYKHSHIIFGRLAQFRNPYYPSANFSTVHLEENILISDLEKNDQ.

The signal sequence occupies residues 1–20; sequence MPLLSLSLLLLLLQVPAGSA. Over 21 to 1392 the chain is Extracellular; it reads ETAAWAVTPE…IHTVKKHPGK (1372 aa). In terms of domain architecture, Ricin B-type lectin spans 38-115; that stretch reads KGIFIIQSEN…CDSTHVSLKW (78 aa). N-linked (GlcNAc...) asparagine glycosylation occurs at Asn-93. One can recognise a Fibronectin type-II domain in the interval 173 to 221; the sequence is AHGTPCMFPFQYNQQWHHECTREGREDNLLWCATTSRYERDEKWGFCPD. Intrachain disulfides connect Cys-178/Cys-204, Cys-192/Cys-219, Cys-260/Cys-354, Cys-330/Cys-346, Cys-406/Cys-501, Cys-478/Cys-493, Cys-617/Cys-634, Cys-699/Cys-796, Cys-774/Cys-788, Cys-840/Cys-938, Cys-915/Cys-930, Cys-992/Cys-1096, Cys-1068/Cys-1088, Cys-1209/Cys-1223, Cys-1280/Cys-1377, and Cys-1354/Cys-1369. 8 C-type lectin domains span residues 229–353, 357–500, 504–641, 646–795, 799–937, 941–1095, 1099–1230, and 1235–1376; these read CDAV…LPYV, YLNP…LFYL, TGLV…KAMS, PVEN…REWI, PRDV…MPSI, KKVW…YGFV, MQDA…LQGA, and PTET…KGFI. N-linked (GlcNAc...) asparagine glycosylation occurs at Asn-454. A glycan (N-linked (GlcNAc...) asparagine) is linked at Asn-1057. Residues 1393–1421 form a helical membrane-spanning segment; sequence GPSHSVIPLTVALTLLVILAISTLSFCMY. The Cytoplasmic portion of the chain corresponds to 1422 to 1463; the sequence is KHSHIIFGRLAQFRNPYYPSANFSTVHLEENILISDLEKNDQ. The Endocytosis signal signature appears at 1436–1442; that stretch reads NPYYPSA.

Interacts with sPLA2-IB/PLA2G1B; this interaction mediates intracellular signaling as well as clearance of extracellular sPLA2-IB/PLA2G1B via endocytotic pathway. Interacts with sPLA2-X/PLA2G10; this interaction mediates sPLA2-X/PLA2G10 clearance and inactivation. In terms of processing, the secretory phospholipase A2 receptor form may be produced by the action of metalloproteinases. It contains all extracellular domains and only lacks transmembrane and cytosolic regions. It is however unclear whether this form is produced by proteolytic cleavage as suggested by some experiments, or by alternative splicing.

The protein localises to the cell membrane. It is found in the secreted. In terms of biological role, receptor for secretory phospholipase A2 (sPLA2). Also able to bind to snake PA2-like toxins. Although its precise function remains unclear, binding of sPLA2 to its receptor participates in both positive and negative regulation of sPLA2 functions as well as clearance of sPLA2. Binding of sPLA2-IB/PLA2G1B induces various effects depending on the cell type, such as activation of the mitogen-activated protein kinase (MAPK) cascade to induce cell proliferation, the production of lipid mediators, selective release of arachidonic acid in bone marrow-derived mast cells. In neutrophils, binding of sPLA2-IB/PLA2G1B can activate p38 MAPK to stimulate elastase release and cell adhesion. May be involved in responses in pro-inflammatory cytokine productions during endotoxic shock. Also has endocytic properties and rapidly internalizes sPLA2 ligands, which is particularly important for the clearance of extracellular sPLA2s to protect their potent enzymatic activities. The soluble secretory phospholipase A2 receptor form is circulating and acts as a negative regulator of sPLA2 functions by blocking the biological functions of sPLA2-IB/PLA2G1B and sPLA2-X/PLA2G10. The sequence is that of Secretory phospholipase A2 receptor (PLA2R1) from Bos taurus (Bovine).